A 562-amino-acid chain; its full sequence is Pyruvate kinase isozyme G, chloroplastic (562 aa).

Arg-121 contributes to the substrate binding site. 4 residues coordinate K(+): Asn-123, Ser-125, Asp-156, and Thr-157. ATP is bound at residue 123–126; it reads NMSH. Position 308 (Glu-308) interacts with Mg(2+). Substrate is bound by residues Gly-331, Asp-332, and Thr-364. Residue Asp-332 participates in Mg(2+) binding.

The protein belongs to the pyruvate kinase family. In terms of assembly, homotetramer. It depends on Mg(2+) as a cofactor. Requires K(+) as cofactor. In terms of tissue distribution, highest levels in leaves. Also found in stems, roots and flowers.

Its subcellular location is the plastid. The protein resides in the chloroplast. It catalyses the reaction pyruvate + ATP = phosphoenolpyruvate + ADP + H(+). Its pathway is carbohydrate degradation; glycolysis; pyruvate from D-glyceraldehyde 3-phosphate: step 5/5. The chain is Pyruvate kinase isozyme G, chloroplastic from Nicotiana tabacum (Common tobacco).